We begin with the raw amino-acid sequence, 366 residues long: Mitochondrial carrier protein MTM1 (366 aa).

Solcar repeat units lie at residues 14-149 (ERML…IRDV), 156-250 (YPTL…CKER), and 266-359 (VHFI…SKKV). 6 helical membrane passes run 17-36 (LSAGAGSVLTSLILTPMDVV), 126-146 (SLTLLMAIPANMVYFSGYEYI), 162-182 (LFCGAIARVFAATSIAPLELV), 229-249 (TLWRDVPFSAIYWSSYELCKE), 268-286 (FINSFASGCISGMIAAICT), and 331-352 (LYTGLAARVIKIRPSCAIMISS).

It belongs to the mitochondrial carrier (TC 2.A.29) family.

Its subcellular location is the mitochondrion inner membrane. Involved in the mitochondrial activation of SOD2 by specifically facilitating insertion of the essential manganese cofactor. Has the ability to activate iron regulon in an iron-dependent manner. Responds to calorie restriction (CR) strength. The protein is Mitochondrial carrier protein MTM1 (MTM1) of Saccharomyces cerevisiae (strain ATCC 204508 / S288c) (Baker's yeast).